Here is a 102-residue protein sequence, read N- to C-terminus: Small ribosomal subunit protein uS10 (102 aa).

This sequence belongs to the universal ribosomal protein uS10 family. Part of the 30S ribosomal subunit.

Functionally, involved in the binding of tRNA to the ribosomes. The chain is Small ribosomal subunit protein uS10 from Geobacter sulfurreducens (strain ATCC 51573 / DSM 12127 / PCA).